The sequence spans 212 residues: 3-isopropylmalate dehydratase small subunit 1 (212 aa).

The protein belongs to the LeuD family. LeuD type 1 subfamily. As to quaternary structure, heterodimer of LeuC and LeuD.

It catalyses the reaction (2R,3S)-3-isopropylmalate = (2S)-2-isopropylmalate. The protein operates within amino-acid biosynthesis; L-leucine biosynthesis; L-leucine from 3-methyl-2-oxobutanoate: step 2/4. In terms of biological role, catalyzes the isomerization between 2-isopropylmalate and 3-isopropylmalate, via the formation of 2-isopropylmaleate. The chain is 3-isopropylmalate dehydratase small subunit 1 from Chromobacterium violaceum (strain ATCC 12472 / DSM 30191 / JCM 1249 / CCUG 213 / NBRC 12614 / NCIMB 9131 / NCTC 9757 / MK).